Reading from the N-terminus, the 595-residue chain is Cyclin-dependent kinase-like 3 (595 aa).

The Protein kinase domain occupies 4–286 (YETLGKVGEG…STDLLRHDYF (283 aa)). ATP is bound by residues 10–18 (VGEGSYGTV) and Lys-33. The short motif at 45–51 (KIATREI) is the [NKR]KIAxRE element. Asp-125 functions as the Proton acceptor in the catalytic mechanism. Thr-158 carries the phosphothreonine modification. Phosphotyrosine is present on Tyr-160. Disordered regions lie at residues 362–427 (VIKA…PHAG), 448–513 (SSNL…NKRK), and 551–586 (RESK…GKNL). A compositionally biased stretch (basic and acidic residues) spans 368-386 (GKGDVPDQKKPEYEGDHRQ). A compositionally biased stretch (polar residues) spans 387 to 397 (QGTADDTQPSS). Positions 448 to 457 (SSNLSHPNSR) are enriched in low complexity. 2 stretches are compositionally biased toward polar residues: residues 468–491 (SSQT…QVQT) and 499–509 (RTGQNDQISSG). Over residues 570-585 (NQEKQEGGDGDCEGKN) the composition is skewed to basic and acidic residues.

This sequence belongs to the protein kinase superfamily. CMGC Ser/Thr protein kinase family. CDC2/CDKX subfamily.

The protein localises to the cytoplasm. The catalysed reaction is L-seryl-[protein] + ATP = O-phospho-L-seryl-[protein] + ADP + H(+). It carries out the reaction L-threonyl-[protein] + ATP = O-phospho-L-threonyl-[protein] + ADP + H(+). This chain is Cyclin-dependent kinase-like 3, found in Mus musculus (Mouse).